The chain runs to 654 residues: Pentatricopeptide repeat-containing protein At3g16610 (654 aa).

PPR repeat units lie at residues 1–32 (MFLSLLETCIRSRNLVLGQVIHQHLLKRSLTL), 34–64 (SSTVLVNLTRLYASCNEVELARHVFDEIPHP), 67–101 (NPIAWDLMIRAYASNDFAEKALDLYYKMLNSGVRP), 102–136 (TKYTYPFVLKACAGLRAIDDGKLIHSHVNCSDFAT), 137–171 (DMYVCTALVDFYAKCGELEMAIKVFDEMPKRDMVA), 172–203 (WNAMISGFSLHCCLTDVIGLFLDMRRIDGLSP), 204–238 (NLSTIVGMFPALGRAGALREGKAVHGYCTRMGFSN), 239–269 (DLVVKTGILDVYAKSKCIIYARRVFDLDFKK), 270–304 (NEVTWSAMIGGYVENEMIKEAGEVFFQMLVNDNVA), 307–341 (TPVAIGLILMGCARFGDLSGGRCVHCYAVKAGFIL), 342–372 (DLTVQNTIISFYAKYGSLCDAFRQFSEIGLK), 373–407 (DVISYNSLITGCVVNCRPEESFRLFHEMRTSGIRP), 408–442 (DITTLLGVLTACSHLAALGHGSSCHGYCVVHGYAV), 443–473 (NTSICNALMDMYTKCGKLDVAKRVFDTMHKR), 474–508 (DIVSWNTMLFGFGIHGLGKEALSLFNSMQETGVNP), 509–543 (DEVTLLAILSACSHSGLVDEGKQLFNSMSRGDFNV), and 546–576 (RIDHYNCMTDLLARAGYLDEAYDFVNKMPFE). The segment at 581 to 654 (VLGTLLSACW…KTPGYSWVDV (74 aa)) is type E motif; degenerate.

This sequence belongs to the PPR family. PCMP-E subfamily.

This Arabidopsis thaliana (Mouse-ear cress) protein is Pentatricopeptide repeat-containing protein At3g16610 (PCMP-E91).